Here is a 117-residue protein sequence, read N- to C-terminus: MDKQEKRIRRARRTRAKIKELGAVRLCVHRSLNHIYAQLISPRDSKVLVCASTLEKEVRSQIKHGGNIQAATAIGKLIAQRAKKAGVTKVAFDRSGYKYHGRVRALAEAVREGGIEF.

The protein belongs to the universal ribosomal protein uL18 family. In terms of assembly, part of the 50S ribosomal subunit; part of the 5S rRNA/L5/L18/L25 subcomplex. Contacts the 5S and 23S rRNAs.

Functionally, this is one of the proteins that bind and probably mediate the attachment of the 5S RNA into the large ribosomal subunit, where it forms part of the central protuberance. The protein is Large ribosomal subunit protein uL18 of Coxiella burnetii (strain CbuK_Q154) (Coxiella burnetii (strain Q154)).